We begin with the raw amino-acid sequence, 252 residues long: Adenosylcobinamide-GDP ribazoletransferase (252 aa).

The next 7 helical transmembrane spans lie at 4-24 (LLLL…LPYI), 35-55 (LVPM…GGMN), 65-85 (SALV…DGAM), 102-122 (VMAD…ILLL), 178-198 (LLPG…VNNH), 201-221 (LITV…AAWF), and 232-252 (TYGA…TILT).

It belongs to the CobS family. Mg(2+) serves as cofactor.

Its subcellular location is the cell inner membrane. It catalyses the reaction alpha-ribazole + adenosylcob(III)inamide-GDP = adenosylcob(III)alamin + GMP + H(+). The enzyme catalyses alpha-ribazole 5'-phosphate + adenosylcob(III)inamide-GDP = adenosylcob(III)alamin 5'-phosphate + GMP + H(+). It participates in cofactor biosynthesis; adenosylcobalamin biosynthesis; adenosylcobalamin from cob(II)yrinate a,c-diamide: step 7/7. Its function is as follows. Joins adenosylcobinamide-GDP and alpha-ribazole to generate adenosylcobalamin (Ado-cobalamin). Also synthesizes adenosylcobalamin 5'-phosphate from adenosylcobinamide-GDP and alpha-ribazole 5'-phosphate. In Trichormus variabilis (strain ATCC 29413 / PCC 7937) (Anabaena variabilis), this protein is Adenosylcobinamide-GDP ribazoletransferase.